Consider the following 147-residue polypeptide: MHRQFLSSRCQNLFFKFKLLLFEVNQMQYVYIFIGGALGALLRYLISFLNTDGGFPIGTLIANLTGAFVMGLLTALTIAFFSNHPTLKKAITTGFLGALTTFSTFQLELIHMFDHQQFITLLLYAVTSYVFGILLCYVGIKLGGGLS.

The next 4 membrane-spanning stretches (helical) occupy residues 29–49, 61–81, 90–110, and 118–138; these read YVYI…ISFL, IANL…IAFF, AITT…LELI, and FITL…LCYV. Gly-97 and Thr-100 together coordinate Na(+).

This sequence belongs to the fluoride channel Fluc/FEX (TC 1.A.43) family.

It localises to the cell membrane. It catalyses the reaction fluoride(in) = fluoride(out). Its activity is regulated as follows. Na(+) is not transported, but it plays an essential structural role and its presence is essential for fluoride channel function. Fluoride-specific ion channel. Important for reducing fluoride concentration in the cell, thus reducing its toxicity. This chain is Fluoride-specific ion channel FluC 1, found in Staphylococcus aureus (strain MRSA252).